We begin with the raw amino-acid sequence, 63 residues long: DNA gyrase inhibitor YacG (63 aa).

The Zn(2+) site is built by cysteine 9, cysteine 12, cysteine 28, and cysteine 32.

The protein belongs to the DNA gyrase inhibitor YacG family. Interacts with GyrB. It depends on Zn(2+) as a cofactor.

Functionally, inhibits all the catalytic activities of DNA gyrase by preventing its interaction with DNA. Acts by binding directly to the C-terminal domain of GyrB, which probably disrupts DNA binding by the gyrase. The protein is DNA gyrase inhibitor YacG of Salmonella choleraesuis (strain SC-B67).